The sequence spans 506 residues: CTL-like protein DDB_G0269978 (506 aa).

N-linked (GlcNAc...) asparagine glycans are attached at residues N15 and N41. 12 helical membrane passes run 91 to 111 (LLYS…TVIA), 126 to 146 (LQGL…FLIW), 161 to 181 (SFFS…GNGW), 182 to 202 (YSWA…YFAF), 226 to 246 (TLLV…IWLF), 256 to 276 (SYWT…LYWT), 279 to 299 (VITY…YFFA), 323 to 343 (FGSI…QFIC), 345 to 367 (GFAR…ALIF), 371 to 393 (LYTF…CNSS), 416 to 436 (ITML…VTMI), and 447 to 467 (WLYV…DIIF).

The protein belongs to the CTL (choline transporter-like) family.

The protein resides in the membrane. This is CTL-like protein DDB_G0269978 from Dictyostelium discoideum (Social amoeba).